Consider the following 373-residue polypeptide: Mitochondrial nicotinamide adenine dinucleotide transporter 1 (373 aa).

At 1 to 80 (MTQTDNPVPN…WVPLSSTQIT (80 aa)) the chain is on the mitochondrial matrix side. Solcar repeat units follow at residues 75-166 (SSTQ…SKKF), 174-263 (FDFV…LKVR), and 276-364 (INLQ…FRNR). A helical transmembrane segment spans residues 81-101 (ALSGAFAGFLSGVAVCPLDVA). The Mitochondrial intermembrane portion of the chain corresponds to 102–141 (KTRLQAQGLQTRFENPYYRGIMGTLSTIVRDEGPRGLYKG). A helical transmembrane segment spans residues 142–162 (LVPIVLGYFPTWMIYFSVYEF). The Mitochondrial matrix segment spans residues 163–176 (SKKFFHGIFPQFDF). Residues 177–199 (VAQSCAAITAGAASTTLTNPIWV) traverse the membrane as a helical segment. The Mitochondrial intermembrane portion of the chain corresponds to 200–235 (VKTRLMLQSNLGEHPTHYKGTFDAFRKLFYQEGFKA). Residues 236–256 (LYAGLVPSLLGLFHVAIHFPI) form a helical membrane-spanning segment. The Mitochondrial matrix segment spans residues 257–280 (YEDLKVRFHCYSRENNTNSINLQR). The helical transmembrane segment at 281 to 297 (LIMASSVSKMIASAVTY) threads the bilayer. The Mitochondrial intermembrane segment spans residues 298 to 335 (PHEILRTRMQLKSDIPDSIQRRLFPLIKATYAQEGLKG). The helical transmembrane segment at 336–358 (FYSGFTTNLVRTIPASAITLVSF) threads the bilayer. The Mitochondrial matrix segment spans residues 359-373 (EYFRNRLENISTMVI).

Belongs to the mitochondrial carrier (TC 2.A.29) family.

Its subcellular location is the mitochondrion inner membrane. It carries out the reaction dAMP(in) + NAD(+)(out) = dAMP(out) + NAD(+)(in). The enzyme catalyses dGMP(in) + NAD(+)(out) = dGMP(out) + NAD(+)(in). It catalyses the reaction GMP(in) + NAD(+)(out) = GMP(out) + NAD(+)(in). The catalysed reaction is AMP(in) + NAD(+)(out) = AMP(out) + NAD(+)(in). It carries out the reaction deamido-NAD(+)(in) + NAD(+)(out) = deamido-NAD(+)(out) + NAD(+)(in). Functionally, mitochondrial inner membrane carrier protein that mediates the import of NAD(+) into mitochondria. Can transport NAD(+) by unidirectional transport or by exchange with intramitochondrially generated dAMP and dGMP. Also able to transport NAD(+) by exchange with AMP, GMP or deamido-NAD (+) in vitro. The sequence is that of Mitochondrial nicotinamide adenine dinucleotide transporter 1 (YIA6) from Saccharomyces cerevisiae (strain ATCC 204508 / S288c) (Baker's yeast).